Reading from the N-terminus, the 206-residue chain is MARYTGPKCKLARREGTDLFLKSARRSIDSKCKLDSRPGQHGAKQPRLSDYGIHLREKQKIRRIYGVLERQFRKYFAEAERRKGSTGENLLQILESRLDNVVYRMGYGSTRAESRQLVSHKAIVVNGEVVNIPSYQVKAGDVVSVREKSKKQVRIAESLALAEQIGFPGWVSVDPKKMEGTFKNAPERSELSSDINEQLVVEFYSK.

The S4 RNA-binding domain maps to 96-156 (SRLDNVVYRM…EKSKKQVRIA (61 aa)).

Belongs to the universal ribosomal protein uS4 family. In terms of assembly, part of the 30S ribosomal subunit. Contacts protein S5. The interaction surface between S4 and S5 is involved in control of translational fidelity.

Its function is as follows. One of the primary rRNA binding proteins, it binds directly to 16S rRNA where it nucleates assembly of the body of the 30S subunit. With S5 and S12 plays an important role in translational accuracy. This is Small ribosomal subunit protein uS4 from Laribacter hongkongensis (strain HLHK9).